The sequence spans 366 residues: Chorismate synthase (366 aa).

Arg-48 is an NADP(+) binding site. Residues 125 to 127 (RSS), 238 to 239 (NA), Gly-278, 293 to 297 (KPTSS), and Arg-319 each bind FMN.

The protein belongs to the chorismate synthase family. As to quaternary structure, homotetramer. FMNH2 serves as cofactor.

The catalysed reaction is 5-O-(1-carboxyvinyl)-3-phosphoshikimate = chorismate + phosphate. It participates in metabolic intermediate biosynthesis; chorismate biosynthesis; chorismate from D-erythrose 4-phosphate and phosphoenolpyruvate: step 7/7. Catalyzes the anti-1,4-elimination of the C-3 phosphate and the C-6 proR hydrogen from 5-enolpyruvylshikimate-3-phosphate (EPSP) to yield chorismate, which is the branch point compound that serves as the starting substrate for the three terminal pathways of aromatic amino acid biosynthesis. This reaction introduces a second double bond into the aromatic ring system. In Hydrogenovibrio crunogenus (strain DSM 25203 / XCL-2) (Thiomicrospira crunogena), this protein is Chorismate synthase.